A 383-amino-acid chain; its full sequence is Photosynthetic reaction center cytochrome c subunit (383 aa).

An N-terminal signal peptide occupies residues 1-22 (MNLGKQLTLPAVAVVASVVLLG). Cysteine 23 carries N-palmitoyl cysteine lipidation. A lipid anchor (S-diacylglycerol cysteine) is attached at cysteine 23. The heme site is built by methionine 94, cysteine 107, cysteine 110, histidine 111, methionine 130, histidine 144, cysteine 152, cysteine 155, histidine 156, methionine 236, cysteine 247, cysteine 250, histidine 251, cysteine 307, cysteine 310, and histidine 311. The segment at 335–383 (PAEAAPATEEAPAAEAEAVEAAPVEEAAPAPVEQAAAPVEDAAPAPQQL) is disordered.

As to quaternary structure, component of the photosynthetic reaction center composed of protein subunits L (PufL), M (PufM), H (PuhA) and cytochrome C (PufC). The reaction center interacts with light-harvesting antenna complex LH1. Binds 4 heme groups per subunit.

It is found in the cellular chromatophore membrane. Its function is as follows. The reaction center of purple bacteria contains a tightly bound cytochrome molecule which re-reduces the photo oxidized primary electron donor. This chain is Photosynthetic reaction center cytochrome c subunit (pufC), found in Allochromatium vinosum (strain ATCC 17899 / DSM 180 / NBRC 103801 / NCIMB 10441 / D) (Chromatium vinosum).